We begin with the raw amino-acid sequence, 183 residues long: Archaemetzincin (183 aa).

A Zn(2+)-binding site is contributed by histidine 131. The active-site Proton acceptor is glutamate 132. 6 residues coordinate Zn(2+): histidine 135, histidine 141, cysteine 142, cysteine 147, cysteine 166, and cysteine 169.

The protein belongs to the peptidase M54 family. As to quaternary structure, monomer. Requires Zn(2+) as cofactor.

Probable zinc metalloprotease whose natural substrate is unknown. The polypeptide is Archaemetzincin (Saccharolobus islandicus (strain Y.N.15.51 / Yellowstone #2) (Sulfolobus islandicus)).